The sequence spans 2178 residues: Genome polyprotein (2178 aa).

The interval 1 to 20 (MGAQVSTQKSGSHENQNILT) is disordered. The N-myristoyl glycine; by host moiety is linked to residue Gly-2. The Cytoplasmic portion of the chain corresponds to 2–1490 (GAQVSTQKSG…AVNQASMIIN (1489 aa)). Residues 564-584 (ALTEGLSDELEEVIVEKTKQT) form an amphipathic alpha-helix region. Residues His-875 and Asp-893 each act as for protease 2A activity in the active site. Zn(2+)-binding residues include Cys-910 and Cys-912. Cys-964 functions as the For protease 2A activity in the catalytic mechanism. Residues Cys-970 and His-972 each contribute to the Zn(2+) site. The interval 1100–1172 (NDGWFRKFND…HDSNPTQEKR (73 aa)) is membrane-binding. Residues 1100 to 1238 (NDGWFRKFND…TPGSGKSLTT (139 aa)) are oligomerization. The segment at 1121-1125 (ANKIS) is RNA-binding. In terms of domain architecture, SF3 helicase spans 1204–1360 (KNKITNYMQF…STYTKNGKLN (157 aa)). Positions 1368, 1371, 1380, and 1385 each coordinate Zn(2+). The C4-type zinc-finger motif lies at 1368 to 1385 (CKDCHQPSNFKKCCPLVC). Positions 1412–1419 (DYKNKVKI) are RNA-binding. The segment at 1423–1428 (LEVLFQ) is oligomerization. Residues 1491–1506 (TILMFVSTLGIVYVIY) lie within the membrane without spanning it. The Cytoplasmic segment spans residues 1507–2178 (KLFAQTQGPY…VLRRRWLDLF (672 aa)). At Tyr-1516 the chain carries O-(5'-phospho-RNA)-tyrosine. One can recognise a Peptidase C3 domain in the interval 1537-1714 (GPNTEFALSL…FSAQLKKQYF (178 aa)). Residues His-1576, Glu-1607, and Cys-1682 each act as for protease 3C activity in the active site. The RdRp catalytic domain occupies 1946–2059 (HLMAFDYSNF…SYPFELDSNI (114 aa)). Mg(2+)-binding residues include Asp-1951 and Asp-2045.

Belongs to the picornaviruses polyprotein family. In terms of assembly, interacts with capsid protein VP1 and capsid protein VP3 to form heterotrimeric protomers. As to quaternary structure, interacts with capsid protein VP0, and capsid protein VP3 to form heterotrimeric protomers. Five protomers subsequently associate to form pentamers which serve as building blocks for the capsid. Interacts with capsid protein VP2, capsid protein VP3 and capsid protein VP4 following cleavage of capsid protein VP0. Interacts with capsid protein VP1 and capsid protein VP3 in the mature capsid. In terms of assembly, interacts with capsid protein VP0 and capsid protein VP1 to form heterotrimeric protomers. Five protomers subsequently associate to form pentamers which serve as building blocks for the capsid. Interacts with capsid protein VP4 in the mature capsid. Interacts with protein 2C; this interaction may be important for virion morphogenesis. As to quaternary structure, interacts with capsid protein VP1 and capsid protein VP3. Homodimer. In terms of assembly, homohexamer; forms a hexameric ring structure with 6-fold symmetry characteristic of AAA+ ATPases. Interacts (via N-terminus) with host RTN3 (via reticulon domain); this interaction is important for viral replication. Interacts with capsid protein VP3; this interaction may be important for virion morphogenesis. As to quaternary structure, interacts with protein 3CD. Homodimer. Interacts with host GBF1. Interacts (via GOLD domain) with host ACBD3 (via GOLD domain); this interaction allows the formation of a viral protein 3A/ACBD3 heterotetramer with a 2:2 stoichiometry, which will stimulate the recruitment of host PI4KB in order to synthesize PI4P at the viral RNA replication sites. In terms of assembly, interacts with RNA-directed RNA polymerase. As to quaternary structure, interacts with protein 3AB and with RNA-directed RNA polymerase. Interacts with Viral protein genome-linked and with protein 3CD. The cofactor is Mg(2+). Post-translationally, specific enzymatic cleavages in vivo by the viral proteases yield processing intermediates and the mature proteins. Myristoylation is required for the formation of pentamers during virus assembly. Further assembly of 12 pentamers and a molecule of genomic RNA generates the provirion. In terms of processing, during virion maturation, immature virions are rendered infectious following cleavage of VP0 into VP4 and VP2. This maturation seems to be an autocatalytic event triggered by the presence of RNA in the capsid and it is followed by a conformational change infectious virion. Post-translationally, myristoylation is required during RNA encapsidation and formation of the mature virus particle. VPg is uridylylated by the polymerase into VPg-pUpU. This acts as a nucleotide-peptide primer for the genomic RNA replication.

It localises to the virion. The protein resides in the host cytoplasm. It is found in the host cytoplasmic vesicle membrane. The protein localises to the host nucleus. The catalysed reaction is a ribonucleoside 5'-triphosphate + H2O = a ribonucleoside 5'-diphosphate + phosphate + H(+). It carries out the reaction Selective cleavage of Tyr-|-Gly bond in the picornavirus polyprotein.. It catalyses the reaction RNA(n) + a ribonucleoside 5'-triphosphate = RNA(n+1) + diphosphate. The enzyme catalyses Selective cleavage of Gln-|-Gly bond in the poliovirus polyprotein. In other picornavirus reactions Glu may be substituted for Gln, and Ser or Thr for Gly.. Its activity is regulated as follows. Replication or transcription is subject to high level of random mutations by the nucleotide analog ribavirin. In terms of biological role, forms an icosahedral capsid of pseudo T=3 symmetry with capsid proteins VP2 and VP3. The capsid is 300 Angstroms in diameter, composed of 60 copies of each capsid protein and enclosing the viral positive strand RNA genome. Capsid protein VP1 mainly forms the vertices of the capsid. Capsid protein VP1 interacts with host cell receptor to provide virion attachment to target host cells. This attachment induces virion internalization. Tyrosine kinases are probably involved in the entry process. After binding to its receptor, the capsid undergoes conformational changes. Capsid protein VP1 N-terminus (that contains an amphipathic alpha-helix) and capsid protein VP4 are externalized. Together, they shape a pore in the host membrane through which viral genome is translocated to host cell cytoplasm. Forms an icosahedral capsid of pseudo T=3 symmetry with capsid proteins VP2 and VP3. The capsid is 300 Angstroms in diameter, composed of 60 copies of each capsid protein and enclosing the viral positive strand RNA genome. Functionally, lies on the inner surface of the capsid shell. After binding to the host receptor, the capsid undergoes conformational changes. Capsid protein VP4 is released, Capsid protein VP1 N-terminus is externalized, and together, they shape a pore in the host membrane through which the viral genome is translocated into the host cell cytoplasm. Its function is as follows. Component of immature procapsids, which is cleaved into capsid proteins VP4 and VP2 after maturation. Allows the capsid to remain inactive before the maturation step. In terms of biological role, cysteine protease that cleaves viral polyprotein and specific host proteins. It is responsible for the autocatalytic cleavage between the P1 and P2 regions, which is the first cleavage occurring in the polyprotein. Also cleaves the host translation initiation factor EIF4G1, in order to shut down the capped cellular mRNA translation. Inhibits the host nucleus-cytoplasm protein and RNA trafficking by cleaving host members of the nuclear pores. Counteracts stress granule formation probably by antagonizing its assembly or promoting its dissassembly. Plays an essential role in the virus replication cycle by acting as a viroporin. Creates a pore in the host endoplasmic reticulum and as a consequence releases Ca2+ in the cytoplasm of infected cell. In turn, high levels of cytoplasmic calcium may trigger membrane trafficking and transport of viral ER-associated proteins to viroplasms, sites of viral genome replication. Functionally, induces and associates with structural rearrangements of intracellular membranes. Displays RNA-binding, nucleotide binding and NTPase activities. May play a role in virion morphogenesis and viral RNA encapsidation by interacting with the capsid protein VP3. Its function is as follows. Localizes the viral replication complex to the surface of membranous vesicles. Together with protein 3CD binds the Cis-Active RNA Element (CRE) which is involved in RNA synthesis initiation. Acts as a cofactor to stimulate the activity of 3D polymerase, maybe through a nucleid acid chaperone activity. In terms of biological role, localizes the viral replication complex to the surface of membranous vesicles. It inhibits host cell endoplasmic reticulum-to-Golgi apparatus transport and causes the disassembly of the Golgi complex, possibly through GBF1 interaction. This would result in depletion of MHC, trail receptors and IFN receptors at the host cell surface. Plays an essential role in viral RNA replication by recruiting ACBD3 and PI4KB at the viral replication sites, thereby allowing the formation of the rearranged membranous structures where viral replication takes place. Acts as a primer for viral RNA replication and remains covalently bound to viral genomic RNA. VPg is uridylylated prior to priming replication into VPg-pUpU. The oriI viral genomic sequence may act as a template for this. The VPg-pUpU is then used as primer on the genomic RNA poly(A) by the RNA-dependent RNA polymerase to replicate the viral genome. During genome replication, the VPg-RNA linkage is removed by the host TDP2, thereby accelerating replication. During the late stage of the replication cycle, host TDP2 is excluded from sites of viral RNA synthesis and encapsidation, allowing for the generation of progeny virions. Functionally, involved in the viral replication complex and viral polypeptide maturation. It exhibits protease activity with a specificity and catalytic efficiency that is different from protease 3C. Protein 3CD lacks polymerase activity. Protein 3CD binds to the 5'UTR of the viral genome. Its function is as follows. Replicates the viral genomic RNA on the surface of intracellular membranes. May form linear arrays of subunits that propagate along a strong head-to-tail interaction called interface-I. Covalently attaches UMP to a tyrosine of VPg, which is used to prime RNA synthesis. The positive stranded RNA genome is first replicated at virus induced membranous vesicles, creating a dsRNA genomic replication form. This dsRNA is then used as template to synthesize positive stranded RNA genomes. ss(+)RNA genomes are either translated, replicated or encapsidated. In terms of biological role, major viral protease that mediates proteolytic processing of the polyprotein. Cleaves host EIF5B, contributing to host translation shutoff. Also cleaves host PABPC1, contributing to host translation shutoff. Cleaves host NLRP1, triggers host N-glycine-mediated degradation of the autoinhibitory NLRP1 N-terminal fragment. This Homo sapiens (Human) protein is Genome polyprotein.